Reading from the N-terminus, the 497-residue chain is Glycerol kinase (497 aa).

Thr13 is a binding site for ADP. ATP-binding residues include Thr13, Thr14, and Ser15. Thr13 serves as a coordination point for sn-glycerol 3-phosphate. Residue Arg17 participates in ADP binding. Sn-glycerol 3-phosphate-binding residues include Arg83, Glu84, and Tyr135. The glycerol site is built by Arg83, Glu84, and Tyr135. His231 bears the Phosphohistidine; by HPr mark. Asp245 provides a ligand contact to sn-glycerol 3-phosphate. 2 residues coordinate glycerol: Asp245 and Gln246. ADP-binding residues include Thr267 and Gly310. Thr267, Gly310, Gln314, and Gly411 together coordinate ATP. Residues Gly411 and Asn415 each coordinate ADP.

The protein belongs to the FGGY kinase family. As to quaternary structure, homotetramer and homodimer (in equilibrium). Post-translationally, the phosphoenolpyruvate-dependent sugar phosphotransferase system (PTS), including enzyme I, and histidine-containing protein (HPr) are required for the phosphorylation, which leads to the activation of the enzyme.

It carries out the reaction glycerol + ATP = sn-glycerol 3-phosphate + ADP + H(+). The protein operates within polyol metabolism; glycerol degradation via glycerol kinase pathway; sn-glycerol 3-phosphate from glycerol: step 1/1. Activated by phosphorylation and inhibited by fructose 1,6-bisphosphate (FBP). Key enzyme in the regulation of glycerol uptake and metabolism. Catalyzes the phosphorylation of glycerol to yield sn-glycerol 3-phosphate. The polypeptide is Glycerol kinase (Listeria monocytogenes serotype 4a (strain HCC23)).